The chain runs to 135 residues: UPF0299 membrane protein YE2790 (135 aa).

4 consecutive transmembrane segments (helical) span residues 4-24 (VTSL…CLWA), 30-50 (LLLP…FALL), 63-83 (GCHL…VGVM), and 93-113 (FGPI…VVGY).

The protein belongs to the UPF0299 family.

It localises to the cell inner membrane. This is UPF0299 membrane protein YE2790 from Yersinia enterocolitica serotype O:8 / biotype 1B (strain NCTC 13174 / 8081).